Here is an 88-residue protein sequence, read N- to C-terminus: Small ribosomal subunit protein bS20 (88 aa).

Belongs to the bacterial ribosomal protein bS20 family.

Its function is as follows. Binds directly to 16S ribosomal RNA. This is Small ribosomal subunit protein bS20 from Methylorubrum populi (strain ATCC BAA-705 / NCIMB 13946 / BJ001) (Methylobacterium populi).